A 60-amino-acid chain; its full sequence is MAVQQNRKTRSRRGMRRSHDALTGKTLSVDSTTGEKHLRHHVTPDGFYKGRKVVDVADDE.

Residues 1–43 (MAVQQNRKTRSRRGMRRSHDALTGKTLSVDSTTGEKHLRHHVT) form a disordered region. The span at 7 to 16 (RKTRSRRGMR) shows a compositional bias: basic residues.

Belongs to the bacterial ribosomal protein bL32 family.

The chain is Large ribosomal subunit protein bL32 from Saccharophagus degradans (strain 2-40 / ATCC 43961 / DSM 17024).